The sequence spans 158 residues: Small ribosomal subunit protein uS9 (158 aa).

A compositionally biased stretch (polar residues) spans 1–20 (MSETMQSLDQLSALKTTQPD). A disordered region spans residues 1-29 (MSETMQSLDQLSALKTTQPDAPTYTKKVD).

The protein belongs to the universal ribosomal protein uS9 family.

The sequence is that of Small ribosomal subunit protein uS9 from Rhodopseudomonas palustris (strain BisB5).